The primary structure comprises 256 residues: Rhamnolipids biosynthesis 3-oxoacyl-[acyl-carrier-protein] reductase (256 aa).

14–38 (VTGGSRGIGQMIAQGLLEAGARVFI) lines the NADP(+) pocket. Ser148 provides a ligand contact to substrate. Tyr162 serves as the catalytic Proton acceptor.

This sequence belongs to the short-chain dehydrogenases/reductases (SDR) family.

It carries out the reaction a (3R)-hydroxyacyl-[ACP] + NADP(+) = a 3-oxoacyl-[ACP] + NADPH + H(+). The protein operates within lipid metabolism; rhamnolipid biosynthesis. In terms of biological role, required for the synthesis of the beta-hydroxy acid moiety of rhamnolipids. This Pseudomonas aeruginosa (strain ATCC 15692 / DSM 22644 / CIP 104116 / JCM 14847 / LMG 12228 / 1C / PRS 101 / PAO1) protein is Rhamnolipids biosynthesis 3-oxoacyl-[acyl-carrier-protein] reductase (rhlG).